We begin with the raw amino-acid sequence, 546 residues long: Chaperonin GroEL (546 aa).

ATP-binding positions include 29–32, K50, 86–90, G414, and D492; these read TMGP and DGTTT.

This sequence belongs to the chaperonin (HSP60) family. As to quaternary structure, forms a cylinder of 14 subunits composed of two heptameric rings stacked back-to-back. Interacts with the co-chaperonin GroES.

It localises to the cytoplasm. The catalysed reaction is ATP + H2O + a folded polypeptide = ADP + phosphate + an unfolded polypeptide.. Its function is as follows. Together with its co-chaperonin GroES, plays an essential role in assisting protein folding. The GroEL-GroES system forms a nano-cage that allows encapsulation of the non-native substrate proteins and provides a physical environment optimized to promote and accelerate protein folding. The protein is Chaperonin GroEL of Helicobacter pylori (strain P12).